A 408-amino-acid polypeptide reads, in one-letter code: Aminomethyltransferase, mitochondrial (408 aa).

A mitochondrion-targeting transit peptide spans 1–30 (MRGGGLWQLGQSVTRRLAQAEKKVIARRCF). E235, R266, and Y404 together coordinate substrate.

It belongs to the GcvT family. The glycine cleavage system is composed of four proteins: P, T, L and H.

The protein localises to the mitochondrion. The enzyme catalyses N(6)-[(R)-S(8)-aminomethyldihydrolipoyl]-L-lysyl-[protein] + (6S)-5,6,7,8-tetrahydrofolate = N(6)-[(R)-dihydrolipoyl]-L-lysyl-[protein] + (6R)-5,10-methylene-5,6,7,8-tetrahydrofolate + NH4(+). Its function is as follows. The glycine cleavage system catalyzes the degradation of glycine. In Mesembryanthemum crystallinum (Common ice plant), this protein is Aminomethyltransferase, mitochondrial (GDCST).